Reading from the N-terminus, the 512-residue chain is Protein arginine N-methyltransferase 2 (512 aa).

Positions 67 to 103 (TSNIDDLPLPPPIQEVEEEEPTQQNIEQQQQTQDESD) are disordered. Over residues 88 to 99 (TQQNIEQQQQTQ) the composition is skewed to low complexity. An SAM-dependent MTase PRMT-type domain is found at 120–508 (DEEYFSSYSK…KTNPFDYSYQ (389 aa)). Residues His-133, Arg-142, Gly-166, and Glu-217 each contribute to the S-adenosyl-L-methionine site. Residues Glu-231 and Glu-240 contribute to the active site. The segment at 375–395 (DDDDNDNNNNNNDNSNDDENK) is disordered.

Belongs to the class I-like SAM-binding methyltransferase superfamily. Protein arginine N-methyltransferase family.

It is found in the cytoplasm. It localises to the nucleus. The catalysed reaction is L-arginyl-[protein] + 2 S-adenosyl-L-methionine = N(omega),N(omega)-dimethyl-L-arginyl-[protein] + 2 S-adenosyl-L-homocysteine + 2 H(+). Its function is as follows. Arginine methyltransferase that methylates the guanidino nitrogens of arginyl residues in some proteins such as histones. This Dictyostelium discoideum (Social amoeba) protein is Protein arginine N-methyltransferase 2 (prmt2).